The following is a 251-amino-acid chain: Triosephosphate isomerase (251 aa).

9 to 11 is a binding site for substrate; sequence NWK. Residue histidine 95 is the Electrophile of the active site. Glutamate 167 serves as the catalytic Proton acceptor. Residues glycine 173, serine 213, and 234-235 contribute to the substrate site; that span reads GG.

It belongs to the triosephosphate isomerase family. Homodimer.

The protein resides in the cytoplasm. It catalyses the reaction D-glyceraldehyde 3-phosphate = dihydroxyacetone phosphate. Its pathway is carbohydrate biosynthesis; gluconeogenesis. The protein operates within carbohydrate degradation; glycolysis; D-glyceraldehyde 3-phosphate from glycerone phosphate: step 1/1. Functionally, involved in the gluconeogenesis. Catalyzes stereospecifically the conversion of dihydroxyacetone phosphate (DHAP) to D-glyceraldehyde-3-phosphate (G3P). The chain is Triosephosphate isomerase from Citrifermentans bemidjiense (strain ATCC BAA-1014 / DSM 16622 / JCM 12645 / Bem) (Geobacter bemidjiensis).